A 418-amino-acid chain; its full sequence is Adenosylhomocysteinase (418 aa).

The substrate site is built by Thr53, Asp125, and Glu150. 151–153 (TTT) serves as a coordination point for NAD(+). Substrate is bound by residues Lys180 and Asp184. Residues Asn185, 214 to 219 (GYGWCG), Glu237, Asn272, 293 to 295 (SGH), and Asn340 contribute to the NAD(+) site.

This sequence belongs to the adenosylhomocysteinase family. NAD(+) serves as cofactor.

The protein localises to the cytoplasm. The catalysed reaction is S-adenosyl-L-homocysteine + H2O = L-homocysteine + adenosine. It participates in amino-acid biosynthesis; L-homocysteine biosynthesis; L-homocysteine from S-adenosyl-L-homocysteine: step 1/1. Its function is as follows. May play a key role in the regulation of the intracellular concentration of adenosylhomocysteine. The sequence is that of Adenosylhomocysteinase from Aquifex aeolicus (strain VF5).